Reading from the N-terminus, the 359-residue chain is Mitochondrial glutathione transporter SLC25A39 (359 aa).

The Mitochondrial intermembrane segment spans residues 1–14 (MADQDPAGISPLQQ). 3 Solcar repeats span residues 9 to 151 (ISPL…LKAF), 159 to 243 (SDLY…VKSW), and 253 to 347 (TSVG…GKSF). A helical transmembrane segment spans residues 15 to 35 (MVASGTGAVVTSLFMTPLDVV). The Mitochondrial matrix portion of the chain corresponds to 36–121 (KVRLQSQRPS…VKIVRHEGTR (86 aa)). [2Fe-2S] cluster is bound by residues cysteine 74, cysteine 78, cysteine 88, and cysteine 94. A helical membrane pass occupies residues 122 to 142 (TLWSGLPATLVMTVPATAIYF). Residues 143-160 (TAYDQLKAFLCGRALTSD) are Mitochondrial intermembrane-facing. Residues 161 to 181 (LYAPMVAGALARLGTVTVISP) traverse the membrane as a helical segment. Topologically, residues 182–214 (LELMRTKLQAQHVSYRELGACVRTAVAQGGWRS) are mitochondrial matrix. A helical membrane pass occupies residues 215–235 (LWLGWGPTALRDVPFSALYWF). Over 236–258 (NYELVKSWLNGFRPKDQTSVGMS) the chain is Mitochondrial intermembrane. The helical transmembrane segment at 259–279 (FVAGGISGTVAAVLTLPFDVV) threads the bilayer. Topologically, residues 280–317 (KTQRQVALGAMEAVRVNPLHVDSTWLLLRRIRAESGTK) are mitochondrial matrix. A helical membrane pass occupies residues 318–338 (GLFAGFLPRIIKAAPSCAIMI). Residues 339 to 359 (STYEFGKSFFQRLNQDRLLGG) lie on the Mitochondrial intermembrane side of the membrane.

Belongs to the mitochondrial carrier (TC 2.A.29) family. In terms of processing, cleaved and degraded by AFG3L2; degradation by AFG3L2 is regulated by the ability of SLC25A39 to bind iron-sulfur. In absence of mitochondrial glutathione, SLC25A39 binds iron-sulfur, preventing cleavage and degradation by AFG3L2. The presence of mitochondrial glutathione prevents iron-sulfur-binding to SLC25A39, promoting cleavage and degradation by AFG3L2. As to expression, expressed in many tissues. Abundant in testis and kidney.

The protein localises to the mitochondrion inner membrane. The catalysed reaction is glutathione(in) = glutathione(out). Its activity is regulated as follows. The activity of SLC25A39 is regulated by levels of mitochondrial glutathione via its ability to bind [2Fe-2S] iron-sulfur cluster. Upon physiological levels of mitochondrial glutathione, glutathione prevents iron-sulfur-binding to SLC25A39 promoting cleavage and degradation by AFG3L2. Upon depletion of mitochondrial glutathione, SLC25A39 binds iron-sulfur, preventing cleavage and degradation by AFG3L2. Its function is as follows. Mitochondrial transporter required for glutathione import into mitochondria. Glutathione, which plays key roles in oxidative metabolism, is produced exclusively in the cytosol and is imported in many organelles. Mitochondrial glutathione is required for the activity and stability of proteins containing iron-sulfur clusters, as well as erythropoiesis. The sequence is that of Mitochondrial glutathione transporter SLC25A39 from Homo sapiens (Human).